Here is a 96-residue protein sequence, read N- to C-terminus: Small ribosomal subunit protein bS6 (96 aa).

It belongs to the bacterial ribosomal protein bS6 family.

In terms of biological role, binds together with bS18 to 16S ribosomal RNA. This Streptococcus thermophilus (strain ATCC BAA-250 / LMG 18311) protein is Small ribosomal subunit protein bS6.